Reading from the N-terminus, the 371-residue chain is Putrescine N-methyltransferase 2 (371 aa).

2 stretches are compositionally biased toward polar residues: residues methionine 1–phenylalanine 14 and glycine 23–glycine 70. The disordered stretch occupies residues methionine 1–glycine 70. The PABS domain maps to proline 82–threonine 319. S-adenosyl-L-methionine contacts are provided by residues glutamine 113, glutamate 188, and aspartate 219–glycine 220. Aspartate 238 serves as the catalytic Proton acceptor. Tyrosine 307 contacts S-adenosyl-L-methionine.

This sequence belongs to the class I-like SAM-binding methyltransferase superfamily. Spermidine/spermine synthase family. As to expression, mainly expressed in roots.

The catalysed reaction is putrescine + S-adenosyl-L-methionine = N-methylputrescine + S-adenosyl-L-homocysteine + H(+). It participates in alkaloid biosynthesis; nicotine biosynthesis. Its function is as follows. Involved in the biosynthesis of pyridine alkaloid natural products, leading mainly to the production of anabasine, anatabine, nicotine and nornicotine, effective deterrents against herbivores with antiparasitic and pesticide properties (neurotoxins); nornicotine serves as the precursor in the synthesis of the carcinogen compound N'-nitrosonornicotine (NNN). Methyltransferase that mediates the conversion of putrescine to N-methylputrescine. This is Putrescine N-methyltransferase 2 from Nicotiana attenuata (Coyote tobacco).